Consider the following 158-residue polypeptide: Phosphopantetheine adenylyltransferase (158 aa).

Thr10 is a substrate binding site. ATP is bound by residues 10–11 and His18; that span reads TF. Residues Lys42, Leu74, and Arg88 each contribute to the substrate site. Residues 89–91, Glu99, and 124–130 contribute to the ATP site; these read GIR and WRYLSST.

It belongs to the bacterial CoaD family. As to quaternary structure, homohexamer. Requires Mg(2+) as cofactor.

The protein localises to the cytoplasm. The enzyme catalyses (R)-4'-phosphopantetheine + ATP + H(+) = 3'-dephospho-CoA + diphosphate. It participates in cofactor biosynthesis; coenzyme A biosynthesis; CoA from (R)-pantothenate: step 4/5. Functionally, reversibly transfers an adenylyl group from ATP to 4'-phosphopantetheine, yielding dephospho-CoA (dPCoA) and pyrophosphate. The protein is Phosphopantetheine adenylyltransferase of Actinobacillus pleuropneumoniae serotype 7 (strain AP76).